A 237-amino-acid polypeptide reads, in one-letter code: tRNA (guanine-N(7)-)-methyltransferase (237 aa).

S-adenosyl-L-methionine is bound by residues Glu-56, Glu-81, Asp-108, and Asp-131. Asp-131 is an active-site residue. Substrate-binding positions include Lys-135, Asp-167, and 204–207 (TKFE).

The protein belongs to the class I-like SAM-binding methyltransferase superfamily. TrmB family.

The enzyme catalyses guanosine(46) in tRNA + S-adenosyl-L-methionine = N(7)-methylguanosine(46) in tRNA + S-adenosyl-L-homocysteine. It participates in tRNA modification; N(7)-methylguanine-tRNA biosynthesis. Functionally, catalyzes the formation of N(7)-methylguanine at position 46 (m7G46) in tRNA. The polypeptide is tRNA (guanine-N(7)-)-methyltransferase (Legionella pneumophila (strain Paris)).